Consider the following 83-residue polypeptide: Small ribosomal subunit protein bS16 (83 aa).

The protein belongs to the bacterial ribosomal protein bS16 family.

The chain is Small ribosomal subunit protein bS16 from Shewanella frigidimarina (strain NCIMB 400).